We begin with the raw amino-acid sequence, 294 residues long: Nucleotide-binding protein CLJ_B3680 (294 aa).

8 to 15 contributes to the ATP binding site; sequence GLSGAGKT. Residue 59 to 62 coordinates GTP; sequence DIRG.

This sequence belongs to the RapZ-like family.

Displays ATPase and GTPase activities. The chain is Nucleotide-binding protein CLJ_B3680 from Clostridium botulinum (strain 657 / Type Ba4).